A 122-amino-acid chain; its full sequence is Large ribosomal subunit protein uL14 (122 aa).

It belongs to the universal ribosomal protein uL14 family. Part of the 50S ribosomal subunit. Forms a cluster with proteins L3 and L19. In the 70S ribosome, L14 and L19 interact and together make contacts with the 16S rRNA in bridges B5 and B8.

Binds to 23S rRNA. Forms part of two intersubunit bridges in the 70S ribosome. This Geobacillus thermodenitrificans (strain NG80-2) protein is Large ribosomal subunit protein uL14.